Consider the following 250-residue polypeptide: Indole-3-glycerol phosphate synthase (250 aa).

Belongs to the TrpC family.

The catalysed reaction is 1-(2-carboxyphenylamino)-1-deoxy-D-ribulose 5-phosphate + H(+) = (1S,2R)-1-C-(indol-3-yl)glycerol 3-phosphate + CO2 + H2O. It functions in the pathway amino-acid biosynthesis; L-tryptophan biosynthesis; L-tryptophan from chorismate: step 4/5. This is Indole-3-glycerol phosphate synthase from Bacillus pumilus (strain SAFR-032).